We begin with the raw amino-acid sequence, 334 residues long: Nucleoid-associated protein YPN_2714 (334 aa).

It belongs to the YejK family.

The protein localises to the cytoplasm. It is found in the nucleoid. The protein is Nucleoid-associated protein YPN_2714 of Yersinia pestis bv. Antiqua (strain Nepal516).